Here is a 2276-residue protein sequence, read N- to C-terminus: Protein Ycf2 (2276 aa).

Residue 1621–1628 participates in ATP binding; it reads GSIGTGRS.

This sequence belongs to the Ycf2 family.

Its subcellular location is the plastid. The protein resides in the chloroplast stroma. Functionally, probable ATPase of unknown function. Its presence in a non-photosynthetic plant (Epifagus virginiana) and experiments in tobacco indicate that it has an essential function which is probably not related to photosynthesis. This Guizotia abyssinica (Niger) protein is Protein Ycf2.